The following is a 72-amino-acid chain: Protein SlyX (72 aa).

The disordered stretch occupies residues 53 to 72; the sequence is KSSQSSMLARPEDETPPPHY.

It belongs to the SlyX family.

This is Protein SlyX from Proteus mirabilis (strain HI4320).